The chain runs to 214 residues: tRNA (guanine-N(7)-)-methyltransferase (214 aa).

S-adenosyl-L-methionine contacts are provided by glutamate 45, aspartate 70, asparagine 97, and asparagine 119. Substrate is bound at residue lysine 123. Residues 125-130 are interaction with RNA; that stretch reads RHNKRR. Substrate contacts are provided by residues aspartate 155 and 193–196; that span reads TEYE.

Belongs to the class I-like SAM-binding methyltransferase superfamily. TrmB family.

It catalyses the reaction guanosine(46) in tRNA + S-adenosyl-L-methionine = N(7)-methylguanosine(46) in tRNA + S-adenosyl-L-homocysteine. It participates in tRNA modification; N(7)-methylguanine-tRNA biosynthesis. Functionally, catalyzes the formation of N(7)-methylguanine at position 46 (m7G46) in tRNA. The polypeptide is tRNA (guanine-N(7)-)-methyltransferase (Clostridium novyi (strain NT)).